The following is a 104-amino-acid chain: Small ribosomal subunit protein uS10 (104 aa).

This sequence belongs to the universal ribosomal protein uS10 family. In terms of assembly, part of the 30S ribosomal subunit.

Functionally, involved in the binding of tRNA to the ribosomes. The polypeptide is Small ribosomal subunit protein uS10 (Ruegeria pomeroyi (strain ATCC 700808 / DSM 15171 / DSS-3) (Silicibacter pomeroyi)).